We begin with the raw amino-acid sequence, 197 residues long: Imidazoleglycerol-phosphate dehydratase (197 aa).

It belongs to the imidazoleglycerol-phosphate dehydratase family.

It localises to the cytoplasm. The catalysed reaction is D-erythro-1-(imidazol-4-yl)glycerol 3-phosphate = 3-(imidazol-4-yl)-2-oxopropyl phosphate + H2O. The protein operates within amino-acid biosynthesis; L-histidine biosynthesis; L-histidine from 5-phospho-alpha-D-ribose 1-diphosphate: step 6/9. This chain is Imidazoleglycerol-phosphate dehydratase, found in Marinobacter nauticus (strain ATCC 700491 / DSM 11845 / VT8) (Marinobacter aquaeolei).